The chain runs to 321 residues: MESNGVPMITLSSGIRMPALGMGTVETMEKGTEREKLAFLNAIEVGYRHFDTAAAYQSEECLGEAIAEALQLGLIKSRDELFITSKLWCADAHADLVLPALQNSLRNLKLEYLDLYLIHHPVSLKPGKLVNEIPKDHILPMDYKSVWAAMEECQTLGFTRAIGVSNFSCKKLQELMATAKIPPVVNQVEMSPTLHQKNLREYCKANNIMITAHSVLGAIGAPWGSNAVMDSKVLHQIAVARGKSVAQVSMRWVYQQGASLVVKSFNEARMKENLKIFDSELTAEDMEKISEIPQSRTSSADFLLSPTGPFKTEEEFWDEKD.

Positions 27 and 51 each coordinate NADPH. Residues Tyr56 and His119 each act as proton donor in the active site. His119 is a binding site for substrate. The NADPH site is built by Ser165, Gln187, Ser214, Leu216, Ser264, and Arg269. Residues 299-321 are disordered; sequence SADFLLSPTGPFKTEEEFWDEKD.

This sequence belongs to the aldo/keto reductase family. As to expression, latex secreting cells (laticifer cells). Expressed constitutively in all organs with highest levels in capsules. Restricted to the parietal region of sieve elements adjacent or proximal to laticifers in roots, stems, leaves and carpels.

The protein localises to the cytoplasm. It is found in the cytosol. The catalysed reaction is codeine + NADP(+) = codeinone + NADPH + H(+). The enzyme catalyses neopine + NADP(+) = neopinone + NADPH + H(+). It catalyses the reaction morphine + NADP(+) = morphinone + NADPH + H(+). It carries out the reaction neomorphine + NADP(+) = neomorphinone + NADPH + H(+). It functions in the pathway alkaloid biosynthesis; morphine biosynthesis. Functionally, NADPH-dependent codeinone reductase involved in biosynthesis of morphinan-type benzylisoquinoline and opiate alkaloids natural products. Reduces codeinone to codeine in the penultimate step in morphine biosynthesis. Can use morphinone, hydrocodone and hydromorphone as substrate during reductive reaction with NADPH as cofactor, and morphine and dihydrocodeine as substrate during oxidative reaction with NADP as cofactor. Converts morphinone to morphine, and neomorphinone to neomorphine. Reduces irreversibly neopinone, a spontaneous isomer of codeinone, to neopine; in planta, neopine levels are limited to low levels. This chain is NADPH-dependent codeinone reductase 1-2, found in Papaver somniferum (Opium poppy).